Here is a 344-residue protein sequence, read N- to C-terminus: 3,4-dihydroxy-2-butanone 4-phosphate synthase (344 aa).

The interval 1–202 is DHBP synthase; it reads MILRRVTEAL…VSDLISYRLE (202 aa). D-ribulose 5-phosphate-binding positions include 27-28, Asp-32, 139-143, and Glu-163; these read RE and RTGHT. Residue Glu-28 participates in Mg(2+) binding. A Mg(2+)-binding site is contributed by His-142. The segment at 203-344 is GTP cyclohydrolase II-like; that stretch reads NESLLKMFCQ…GLKLVETISL (142 aa).

It in the N-terminal section; belongs to the DHBP synthase family. The protein in the C-terminal section; belongs to the GTP cyclohydrolase II family. The cofactor is Mg(2+). It depends on Mn(2+) as a cofactor.

It carries out the reaction D-ribulose 5-phosphate = (2S)-2-hydroxy-3-oxobutyl phosphate + formate + H(+). Its pathway is cofactor biosynthesis; riboflavin biosynthesis; 2-hydroxy-3-oxobutyl phosphate from D-ribulose 5-phosphate: step 1/1. Functionally, catalyzes the conversion of D-ribulose 5-phosphate to formate and 3,4-dihydroxy-2-butanone 4-phosphate. The sequence is that of 3,4-dihydroxy-2-butanone 4-phosphate synthase (ribB) from Helicobacter pylori (strain J99 / ATCC 700824) (Campylobacter pylori J99).